A 350-amino-acid polypeptide reads, in one-letter code: Trans-enoyl reductase iliB (350 aa).

An NADP(+)-binding site is contributed by 50 to 53; sequence VDGK. 145 to 152 contributes to the substrate binding site; that stretch reads AAIATVGL. NADP(+) contacts are provided by residues 177 to 180, Tyr-195, and 242 to 243; these read SAAS and LD. Position 262–266 (262–266) interacts with substrate; sequence TPTQF. Residue 331 to 332 coordinates NADP(+); the sequence is IK.

The protein belongs to the zinc-containing alcohol dehydrogenase family. As to quaternary structure, monomer.

The catalysed reaction is N-[(4E,6E,10S,12Z,14E)-6,10-dimethyl-3-oxohexadeca-4,6,12,14-tetraenoyl]-L-tyrosyl-[ACP] = (3E,5S)-3-[(2E,4E,8S,10E,12Z)-1-hydroxy-4,8-dimethyltetradeca-2,4,10,12-tetraen-1-ylidene]-5-[(4-hydroxyphenyl)methyl]pyrrolidine-2,4-dione + holo-[ACP] + H(+). The protein operates within mycotoxin biosynthesis. Its function is as follows. Trans-enoyl reductase; part of the gene cluster that mediates the biosynthesis of ilicicolin H, a 4-hydroxy-2-pyridonealkaloid that has potent and broad antifungal activities by inhibiting the mitochondrial respiration chain. IliB collaborates with the hybrid PKS-NRPS synthetase iliA to assemble the backbone of ilicicolin H. The PKS portion of iliA and trans-acting enoyl reductase iliB work together to construct an octaketide, and two methyl groups are introduced by the MT domain of iliA during the chain assembly. The nascent chain is then condensed with tyrosine, catalyzed by the iliA C domain, and the resulting PKS-NRPS hybrid is offloaded by the iliA RED domain to form an advanced tetramic acid intermediate. The biosynthesis of ilicicolin H starts with formation of the tetramic acid by the hybrid PKS-NRPS synthetase iliA with the partnering trans-enoyl reductase iliB since iliA lacks a designated enoylreductase (ER) domain. The cytochrome P450 monooxygenase iliC then catalyzes the ring expansion of the tetramate to the acyclic 2-pyridone. The pericyclase iliD further converts the acyclic 2-pyridone into 8-epi-ilicicolin H. 8-epi-ilicicolin H might then spontaneously convert to ilicicolin H since ilicicolin H is produced in the absence of the epimerase iliE, in contrast to what was observed for the Talaromyces variabilis ilicolin H biosynthetic pathway. The sequence is that of Trans-enoyl reductase iliB from Hypocrea jecorina (strain QM6a) (Trichoderma reesei).